A 670-amino-acid chain; its full sequence is Oxidoreductase PigB (670 aa).

Residues 1 to 19 (MIIQRLFGILYMLAGLAKA) form the signal peptide. The next 4 membrane-spanning stretches (helical) occupy residues 53-73 (GDVI…ILML), 76-96 (LWTT…VVIL), 98-118 (QSQP…LYML), and 238-258 (LVFF…VGFI).

This sequence belongs to the flavin monoamine oxidase family. Requires FAD as cofactor.

Its subcellular location is the membrane. It participates in antibiotic biosynthesis; prodigiosin biosynthesis. Involved in the biosynthesis of 2-methyl-3-n-amyl-pyrrole (MAP), one of the terminal products involved in the biosynthesis of the red antibiotic prodigiosin (Pig). Catalyzes the oxidation of dihydro form of MAP (H2MAP) to yield MAP. This Serratia sp. (strain ATCC 39006) (Prodigiosinella confusarubida) protein is Oxidoreductase PigB.